The chain runs to 285 residues: Methanethiol S-methyltransferase 1 (285 aa).

5 helical membrane-spanning segments follow: residues 55–75, 88–108, 132–152, 162–182, and 224–244; these read AYLVFFVTILYAIGFVMGLVV, AEAVIINLLLMALFAVQHSVM, LFASLSLLLLFWQWRPLPTVI, VTLVTVSFAGWVLVFTSTFII, and FIVAFWAAPVMTAGHLLFAAV.

Belongs to the nurim family.

It is found in the membrane. It catalyses the reaction methanethiol + S-adenosyl-L-methionine = dimethyl sulfide + S-adenosyl-L-homocysteine + H(+). Functionally, catalyzes the methylation of methanethiol (MeSH) to yield dimethylsulphide (DMS). The protein is Methanethiol S-methyltransferase 1 of Bradyrhizobium diazoefficiens (strain JCM 10833 / BCRC 13528 / IAM 13628 / NBRC 14792 / USDA 110).